The following is an 86-amino-acid chain: Cell division topological specificity factor (86 aa).

The protein belongs to the MinE family.

Prevents the cell division inhibition by proteins MinC and MinD at internal division sites while permitting inhibition at polar sites. This ensures cell division at the proper site by restricting the formation of a division septum at the midpoint of the long axis of the cell. The polypeptide is Cell division topological specificity factor (Azoarcus sp. (strain BH72)).